A 49-amino-acid polypeptide reads, in one-letter code: Large ribosomal subunit protein bL32 (49 aa).

This sequence belongs to the bacterial ribosomal protein bL32 family.

This chain is Large ribosomal subunit protein bL32, found in Nautilia profundicola (strain ATCC BAA-1463 / DSM 18972 / AmH).